Here is a 957-residue protein sequence, read N- to C-terminus: Serine-aspartate repeat-containing protein C (957 aa).

Residues 1 to 50 (MNNKKTVTNRKGMIPNRLNKFSIRKYSVGTASILVGTTLIFGLSGHEAKA) form the signal peptide. The segment at 51–166 (AEHTNGELNQ…TPKTTTIKPR (116 aa)) is disordered. Residues 51–495 (AEHTNGELNQ…GSSTANGDQK (445 aa)) form a ligand binding A region region. The segment covering 56-71 (GELNQSKNETTAPSEN) has biased composition (polar residues). Residues 72–83 (KTTEKVDSRQLK) are compositionally biased toward basic and acidic residues. Over residues 84–114 (DNTQTATADQPKVTMSDSATVKETSSNMQSP) the composition is skewed to polar residues. Residues 115 to 132 (QNATASQSTTQTSNVTTN) show a composition bias toward low complexity. Positions 133–164 (DKSSTTYSNETDKSNLTQAKDVSATPKTTTIK) are enriched in polar residues. CNA-B domains lie at 496–606 (KYNL…YKTP) and 607–717 (KYSL…EEET). The disordered stretch occupies residues 678–937 (TQTGTNTTED…NNSNNGTLFG (260 aa)). Acidic residues-rich tracts occupy residues 685 to 695 (TEDDKDADGGE) and 712 to 896 (YYEE…DSDS). The short motif at 920–924 (LPETG) is the LPXTG sorting signal element. Residues 922-937 (ETGSENNNSNNGTLFG) are compositionally biased toward low complexity. At T923 the chain carries Pentaglycyl murein peptidoglycan amidated threonine. A propeptide spans 924–957 (GSENNNSNNGTLFGGLFAALGSLLLFGRRKKQNK) (removed by sortase).

This sequence belongs to the serine-aspartate repeat-containing protein (SDr) family. As to quaternary structure, homodimerizes; via N2-Domain. Interacts with host NRXN1; this interaction mediates bacterial attachment to host cells.

It localises to the secreted. It is found in the cell wall. Cell surface-associated calcium-binding protein which plays an important role in adhesion and pathogenesis. Mediates interactions with components of the extracellular matrix such as host NRXN1 to promote bacterial adhesion. The polypeptide is Serine-aspartate repeat-containing protein C (sdrC) (Staphylococcus aureus (strain MSSA476)).